The following is a 548-amino-acid chain: Chaperonin GroEL (548 aa).

ATP contacts are provided by residues 29 to 32 (TLGP), K50, 86 to 90 (DGTTT), G414, 478 to 480 (NAA), and D494.

This sequence belongs to the chaperonin (HSP60) family. As to quaternary structure, forms a cylinder of 14 subunits composed of two heptameric rings stacked back-to-back. Interacts with the co-chaperonin GroES.

It is found in the cytoplasm. The enzyme catalyses ATP + H2O + a folded polypeptide = ADP + phosphate + an unfolded polypeptide.. Functionally, together with its co-chaperonin GroES, plays an essential role in assisting protein folding. The GroEL-GroES system forms a nano-cage that allows encapsulation of the non-native substrate proteins and provides a physical environment optimized to promote and accelerate protein folding. In Psychrobacter sp. (strain PRwf-1), this protein is Chaperonin GroEL.